A 136-amino-acid polypeptide reads, in one-letter code: Alpha-2-purothionin (136 aa).

Residues 1 to 27 form the signal peptide; that stretch reads MGSKGLKGVMVCLLILGLVLEQVQVEG. 4 cysteine pairs are disulfide-bonded: cysteine 30-cysteine 66, cysteine 31-cysteine 58, cysteine 39-cysteine 56, and cysteine 43-cysteine 52. The propeptide at 73–136 is acidic domain; it reads LALESNSDEP…GDAGLTSLDA (64 aa).

This sequence belongs to the plant thionin (TC 1.C.44) family. 4 C-C subfamily.

It is found in the secreted. Its function is as follows. Thionins are small plant proteins which are toxic to animal cells. They seem to exert their toxic effect at the level of the cell membrane. Their precise function is not known. The chain is Alpha-2-purothionin (THI1.2) from Triticum aestivum (Wheat).